The sequence spans 78 residues: MRLILWLPVLVVVLLMVLEGPAPAQGAPDIAGTFRNIPNSLKEFGNNLKDAFENIPEATRKLMTSFAEGLKNFRIPMV.

The first 26 residues, 1–26, serve as a signal peptide directing secretion; that stretch reads MRLILWLPVLVVVLLMVLEGPAPAQG.

It belongs to the apolipoprotein C1 family.

The protein resides in the secreted. In terms of biological role, inhibitor of lipoprotein binding to the low density lipoprotein (LDL) receptor, LDL receptor-related protein, and very low density lipoprotein (VLDL) receptor. Associates with high density lipoproteins (HDL) and the triacylglycerol-rich lipoproteins in the plasma and makes up about 10% of the protein of the VLDL and 2% of that of HDL. Appears to interfere directly with fatty acid uptake and is also the major plasma inhibitor of cholesteryl ester transfer protein (CETP). Binds free fatty acids and reduces their intracellular esterification. Modulates the interaction of APOE with beta-migrating VLDL and inhibits binding of beta-VLDL to the LDL receptor-related protein. This Lynx pardinus (Iberian lynx) protein is Apolipoprotein C-I (APOC1).